A 280-amino-acid polypeptide reads, in one-letter code: MTFSTQIKAELVQNKLIDKHWNVFLAGFFQNNLKLLYNRNWSFKVQSEALKEQFVQNLKFDFKTKASKKYFLFEFNADINVINTLLKLDVTTSELVVKQVYLIAAFLSGGSVSDLINSNNFHLQISSNNEFQIQQLLKLFSFFKKTVKQNQLVVYLKSYEKICNFLKLIQAFDGYLAFENKQLEKSFTLNQLRKSNLEVANLMKTIRSNNQTNQLQLKSFIKSSSFAKRPLNFQRYCLIKSDHPDWSLEQIANFFFTKYNIKISRSGIQHFSVNLKKLCQ.

Residues 247–279 constitute a DNA-binding region (H-T-H motif); it reads SLEQIANFFFTKYNIKISRSGIQHFSVNLKKLC.

Belongs to the WhiA family.

Its function is as follows. Involved in cell division and chromosome segregation. This chain is Probable cell division protein WhiA, found in Mycoplasma genitalium (strain ATCC 33530 / DSM 19775 / NCTC 10195 / G37) (Mycoplasmoides genitalium).